A 182-amino-acid chain; its full sequence is Peptidyl-tRNA hydrolase (182 aa).

TRNA is bound at residue Tyr-14. Residue His-19 is the Proton acceptor of the active site. The tRNA site is built by Phe-64, Asn-66, and Asn-112.

Belongs to the PTH family. As to quaternary structure, monomer.

Its subcellular location is the cytoplasm. It catalyses the reaction an N-acyl-L-alpha-aminoacyl-tRNA + H2O = an N-acyl-L-amino acid + a tRNA + H(+). In terms of biological role, hydrolyzes ribosome-free peptidyl-tRNAs (with 1 or more amino acids incorporated), which drop off the ribosome during protein synthesis, or as a result of ribosome stalling. Catalyzes the release of premature peptidyl moieties from peptidyl-tRNA molecules trapped in stalled 50S ribosomal subunits, and thus maintains levels of free tRNAs and 50S ribosomes. The polypeptide is Peptidyl-tRNA hydrolase (Wolbachia sp. subsp. Drosophila simulans (strain wRi)).